A 206-amino-acid chain; its full sequence is Charged multivesicular body protein 2a homolog 1 (206 aa).

The disordered stretch occupies residues 1–32 (MSFFGGNKKTPEQELKDSKRELSKGQREMDRE). Residues 9-32 (KTPEQELKDSKRELSKGQREMDRE) are compositionally biased toward basic and acidic residues. Coiled coils occupy residues 12 to 80 (EQEL…RATK) and 114 to 148 (NKQTDLVQLQKTMMEYEKQTQRVEMTEEMMQDMFE).

It belongs to the SNF7 family. Probable core component of the endosomal sorting required for transport complex III (ESCRT-III). ESCRT-III components are thought to multimerize to form a flat lattice on the perimeter membrane of the endosome.

The protein resides in the endosome membrane. Functionally, probable core component of the endosomal sorting required for transport complex III (ESCRT-III) which is involved in multivesicular bodies (MVBs) formation and sorting of endosomal cargo proteins into MVBs. MVBs contain intraluminal vesicles (ILVs) that are generated by invagination and scission from the limiting membrane of the endosome and are delivered to lysosomes enabling degradation of membrane proteins. This Dictyostelium discoideum (Social amoeba) protein is Charged multivesicular body protein 2a homolog 1 (chmp2a1).